Consider the following 204-residue polypeptide: Pyridoxal 5'-phosphate synthase subunit PdxT (204 aa).

52–54 (GES) lines the L-glutamine pocket. Cys-84 acts as the Nucleophile in catalysis. Residues Arg-116 and 143–144 (IR) contribute to the L-glutamine site. Active-site charge relay system residues include His-184 and Glu-186.

Belongs to the glutaminase PdxT/SNO family. In terms of assembly, in the presence of PdxS, forms a dodecamer of heterodimers. Only shows activity in the heterodimer.

It catalyses the reaction aldehydo-D-ribose 5-phosphate + D-glyceraldehyde 3-phosphate + L-glutamine = pyridoxal 5'-phosphate + L-glutamate + phosphate + 3 H2O + H(+). The catalysed reaction is L-glutamine + H2O = L-glutamate + NH4(+). It functions in the pathway cofactor biosynthesis; pyridoxal 5'-phosphate biosynthesis. Functionally, catalyzes the hydrolysis of glutamine to glutamate and ammonia as part of the biosynthesis of pyridoxal 5'-phosphate. The resulting ammonia molecule is channeled to the active site of PdxS. This is Pyridoxal 5'-phosphate synthase subunit PdxT from Pyrobaculum arsenaticum (strain DSM 13514 / JCM 11321 / PZ6).